The sequence spans 218 residues: MSMGLEIAGTSLAVLGWLSTIVCCALPMWRVTAFIGSSIITAQITWEGLWMNCVVQSTGQMQCKVYDSLLALPQDLQAARALIVVSILLAAFGLLVALVGAQCTNCVQDDTAKAKITIVAGVLFLLAALLTLVPVSWSANTIIRDFYNPLVPDAQKREMGAGLYVGWAAAALQLLGGALLCCSCPPRDKKYAPTKIVYSAPRSAGPGTSTAYDRKDYV.

The Cytoplasmic segment spans residues 1 to 8; sequence MSMGLEIA. Residues 9–29 traverse the membrane as a helical segment; sequence GTSLAVLGWLSTIVCCALPMW. The Extracellular portion of the chain corresponds to 30–80; that stretch reads RVTAFIGSSIITAQITWEGLWMNCVVQSTGQMQCKVYDSLLALPQDLQAAR. The helical transmembrane segment at 81–101 threads the bilayer; it reads ALIVVSILLAAFGLLVALVGA. Residues 102-115 lie on the Cytoplasmic side of the membrane; the sequence is QCTNCVQDDTAKAK. Residues 116 to 136 form a helical membrane-spanning segment; it reads ITIVAGVLFLLAALLTLVPVS. Residues 137–159 lie on the Extracellular side of the membrane; that stretch reads WSANTIIRDFYNPLVPDAQKREM. The helical transmembrane segment at 160-180 threads the bilayer; the sequence is GAGLYVGWAAAALQLLGGALL. Over 181-218 the chain is Cytoplasmic; it reads CCSCPPRDKKYAPTKIVYSAPRSAGPGTSTAYDRKDYV. A Phosphotyrosine modification is found at Tyr-198. A phosphoserine mark is found at Ser-199 and Ser-209. The interactions with TJP1, TJP2 and TJP3 stretch occupies residues 217–218; that stretch reads YV.

Belongs to the claudin family. Can form homo- and heteropolymers with other CLDN. Homopolymers interact with CLDN1 and CLDN2 homopolymers. Interacts in cis (within the same plasma membrane) with CLDN19. Directly interacts with TJP1/ZO-1, TJP2/ZO-2 and TJP3/ZO-3.

Its subcellular location is the cell junction. The protein resides in the tight junction. The protein localises to the cell membrane. Functionally, plays a major role in tight junction-specific obliteration of the intercellular space, through calcium-independent cell-adhesion activity. This Canis lupus familiaris (Dog) protein is Claudin-3 (CLDN3).